The following is an 852-amino-acid chain: Kinesin-like protein KIF18B (852 aa).

A Kinesin motor domain is found at threonine 7 to isoleucine 351. Glycine 109 to threonine 116 lines the ATP pocket. Residues isoleucine 366–glycine 393 are a coiled coil. 2 disordered regions span residues tyrosine 390–proline 424 and glutamine 437–leucine 485. The residue at position 404 (serine 404) is a Phosphoserine. Threonine 417 carries the phosphothreonine modification. A compositionally biased stretch (acidic residues) spans glutamine 451 to alanine 461. A phosphoserine mark is found at serine 452, serine 480, and serine 558. Disordered stretches follow at residues isoleucine 575–arginine 594 and glycine 602–valine 689. Over residues valine 577–tyrosine 588 the composition is skewed to pro residues. A Nuclear localization signal motif is present at residues proline 624–proline 632. 2 positions are modified to phosphoserine: serine 633 and serine 639. An MAPRE1-binding motif is present at residues serine 653–proline 656. Residue serine 662 is modified to Phosphoserine. The span at proline 664–serine 673 shows a compositional bias: polar residues. Threonine 674 is subject to Phosphothreonine. Residues threonine 711–phenylalanine 736 form a KIF2C-binding region. Positions methionine 767–arginine 798 are disordered. 2 consecutive short sequence motifs (MAPRE1-binding) follow at residues serine 774–proline 777 and alanine 800–proline 803. At serine 822 the chain carries Phosphoserine.

Belongs to the TRAFAC class myosin-kinesin ATPase superfamily. Kinesin family. In terms of assembly, interacts with MAPRE1; this interaction is required for efficient accumulation at microtubule plus ends. Interacts with KIF2C at microtubule tips; this interaction increases the affinity of both partners for microtubule plus ends and is required for robust microtubule depolymerization. KIF2C phosphorylation by AURKA or AURKB strongly reduces KIF18B-binding. In terms of tissue distribution, shows a prominent expression in the amygdala.

The protein localises to the nucleus. The protein resides in the cytoplasm. It is found in the cytoskeleton. Functionally, in complex with KIF2C, constitutes the major microtubule plus-end depolymerizing activity in mitotic cells. Its major role may be to transport KIF2C and/or MAPRE1 along microtubules. This chain is Kinesin-like protein KIF18B (KIF18B), found in Homo sapiens (Human).